Here is a 458-residue protein sequence, read N- to C-terminus: Sushi repeat-containing protein SRPX2 (458 aa).

A signal peptide spans Met1–Ser18. Sushi domains lie at Ala62–Arg112, Ile113–Asp171, and Arg255–Pro314. Cystine bridges form between Cys64-Cys98, Cys84-Cys110, Cys115-Cys156, and Cys142-Cys169. Positions Val170–Val254 constitute an HYR domain. Intrachain disulfides connect Cys257-Cys299 and Cys285-Cys312.

In terms of assembly, forms homooligomers.

It is found in the secreted. The protein resides in the cytoplasm. Its subcellular location is the cell surface. It localises to the synapse. In terms of biological role, may play a role in angiogenesis, synapse formation, cellular migration and adhesion. The sequence is that of Sushi repeat-containing protein SRPX2 (srpx2) from Xenopus laevis (African clawed frog).